Reading from the N-terminus, the 95-residue chain is Aspartyl/glutamyl-tRNA(Asn/Gln) amidotransferase subunit C (95 aa).

The protein belongs to the GatC family. In terms of assembly, heterotrimer of A, B and C subunits.

The catalysed reaction is L-glutamyl-tRNA(Gln) + L-glutamine + ATP + H2O = L-glutaminyl-tRNA(Gln) + L-glutamate + ADP + phosphate + H(+). It catalyses the reaction L-aspartyl-tRNA(Asn) + L-glutamine + ATP + H2O = L-asparaginyl-tRNA(Asn) + L-glutamate + ADP + phosphate + 2 H(+). Functionally, allows the formation of correctly charged Asn-tRNA(Asn) or Gln-tRNA(Gln) through the transamidation of misacylated Asp-tRNA(Asn) or Glu-tRNA(Gln) in organisms which lack either or both of asparaginyl-tRNA or glutaminyl-tRNA synthetases. The reaction takes place in the presence of glutamine and ATP through an activated phospho-Asp-tRNA(Asn) or phospho-Glu-tRNA(Gln). This chain is Aspartyl/glutamyl-tRNA(Asn/Gln) amidotransferase subunit C, found in Nitrosospira multiformis (strain ATCC 25196 / NCIMB 11849 / C 71).